A 507-amino-acid chain; its full sequence is Glycerol kinase (507 aa).

Thr14 provides a ligand contact to ADP. ATP-binding residues include Thr14, Thr15, and Ser16. Thr14 serves as a coordination point for sn-glycerol 3-phosphate. Arg18 is a binding site for ADP. Residues Arg84, Glu85, Tyr137, and Asp247 each contribute to the sn-glycerol 3-phosphate site. Glycerol is bound by residues Arg84, Glu85, Tyr137, Asp247, and Gln248. ADP-binding residues include Thr269 and Gly312. The ATP site is built by Thr269, Gly312, Gln316, and Gly413. Positions 413 and 417 each coordinate ADP.

Belongs to the FGGY kinase family.

The catalysed reaction is glycerol + ATP = sn-glycerol 3-phosphate + ADP + H(+). The protein operates within polyol metabolism; glycerol degradation via glycerol kinase pathway; sn-glycerol 3-phosphate from glycerol: step 1/1. Inhibited by fructose 1,6-bisphosphate (FBP). Key enzyme in the regulation of glycerol uptake and metabolism. Catalyzes the phosphorylation of glycerol to yield sn-glycerol 3-phosphate. This chain is Glycerol kinase, found in Psychromonas ingrahamii (strain DSM 17664 / CCUG 51855 / 37).